Reading from the N-terminus, the 589-residue chain is 3-hydroxy-3-methylglutaryl coenzyme A reductase 2-B (589 aa).

Residues 1 to 35 (MDVRRRPVTKTLTAGEPLKSQNQHSSSLKASDALP) are Lumenal-facing. Residues 36–56 (LPLYLTNGLFFTMFFSVMYFL) form a helical membrane-spanning segment. The Cytoplasmic segment spans residues 57–79 (LHRWREKIRNSVPLHVVTLSELA). The helical transmembrane segment at 80 to 100 (ALVLLVASVIYLLGFFGIGFV) threads the bilayer. The Lumenal portion of the chain corresponds to 101 to 544 (QSLIRPSPDS…SKESPGPNSR (444 aa)). Asn-256 carries N-linked (GlcNAc...) asparagine glycosylation. The active-site Charge relay system is the Glu-268. Asn-332 is a glycosylation site (N-linked (GlcNAc...) asparagine). Catalysis depends on charge relay system residues Lys-400 and Asp-476. A helical transmembrane segment spans residues 545-565 (LLASIVAGSVLAGELSLMSAL). Over 566 to 589 (AAGQLVKSHMKFNRSSKDVSKLSS) the chain is Cytoplasmic. The active-site Proton donor is His-574.

Belongs to the HMG-CoA reductase family.

Its subcellular location is the endoplasmic reticulum membrane. The enzyme catalyses (R)-mevalonate + 2 NADP(+) + CoA = (3S)-3-hydroxy-3-methylglutaryl-CoA + 2 NADPH + 2 H(+). It participates in metabolic intermediate biosynthesis; (R)-mevalonate biosynthesis; (R)-mevalonate from acetyl-CoA: step 3/3. In terms of biological role, catalyzes the synthesis of mevalonate, the specific precursor of all isoprenoid compounds present in plants. Component of the triterpene saponins (e.g. ginsenosides or panaxosides) and phytosterols biosynthetic pathways. Promotes triterpenes accumulation in roots. This is 3-hydroxy-3-methylglutaryl coenzyme A reductase 2-B from Panax ginseng (Korean ginseng).